Here is a 275-residue protein sequence, read N- to C-terminus: Transcriptional coregulator psa-3 (275 aa).

The MEIS N-terminal domain occupies 91 to 161 (TDDIKRLFQS…RRTVCHEALV (71 aa)). The segment at 239 to 275 (QLPPNFLKPSNEKSPEKSEEEKSQKPSSSPKSPSLSD) is disordered. Positions 248-262 (SNEKSPEKSEEEKSQ) are enriched in basic and acidic residues. Low complexity predominate over residues 263 to 275 (KPSSSPKSPSLSD).

Interacts with homeobox protein ceh-20; the interaction is direct, facilitates nuclear localization of ceh-20 and may stabilize interaction of a ceh-20-nob-1 complex with DNA.

It localises to the nucleus. In terms of biological role, probable transcription coregulator. Required for asymmetric cell divisions of the T hypodermal cells, and cell fate determination, in concert with homeobox proteins nob-1 and ceh-20. Acts downstream of the Wnt signaling pathway, and of ceh-20 and nob-1. The polypeptide is Transcriptional coregulator psa-3 (Caenorhabditis elegans).